A 544-amino-acid polypeptide reads, in one-letter code: Chaperonin GroEL 3 (544 aa).

Residues 30 to 33, lysine 51, 87 to 91, glycine 415, and aspartate 495 each bind ATP; these read TLGP and DGTTT.

It belongs to the chaperonin (HSP60) family. As to quaternary structure, forms a cylinder of 14 subunits composed of two heptameric rings stacked back-to-back. Interacts with the co-chaperonin GroES.

The protein resides in the cytoplasm. The enzyme catalyses ATP + H2O + a folded polypeptide = ADP + phosphate + an unfolded polypeptide.. Functionally, together with its co-chaperonin GroES, plays an essential role in assisting protein folding. The GroEL-GroES system forms a nano-cage that allows encapsulation of the non-native substrate proteins and provides a physical environment optimized to promote and accelerate protein folding. The chain is Chaperonin GroEL 3 from Psychromonas ingrahamii (strain DSM 17664 / CCUG 51855 / 37).